A 98-amino-acid polypeptide reads, in one-letter code: NADH-ubiquinone oxidoreductase chain 4L (98 aa).

A run of 3 helical transmembrane segments spans residues 1 to 21 (MSSI…GLLM), 29 to 49 (SLLC…VTML), and 61 to 81 (VMLM…LVTV).

This sequence belongs to the complex I subunit 4L family. As to quaternary structure, core subunit of respiratory chain NADH dehydrogenase (Complex I) which is composed of 45 different subunits.

The protein resides in the mitochondrion inner membrane. The enzyme catalyses a ubiquinone + NADH + 5 H(+)(in) = a ubiquinol + NAD(+) + 4 H(+)(out). Core subunit of the mitochondrial membrane respiratory chain NADH dehydrogenase (Complex I) which catalyzes electron transfer from NADH through the respiratory chain, using ubiquinone as an electron acceptor. Part of the enzyme membrane arm which is embedded in the lipid bilayer and involved in proton translocation. The chain is NADH-ubiquinone oxidoreductase chain 4L (MT-ND4L) from Tamandua tetradactyla (Southern anteater).